The chain runs to 790 residues: SH3 domain-containing protein 19 (790 aa).

Disordered regions lie at residues E21–Q196 and E241–Q374. S65 bears the Phosphoserine mark. The segment covering N287 to L296 has biased composition (polar residues). Pro residues predominate over residues Q336 to K351. The tract at residues V342–S358 is interaction with SH3GL1. Over residues N365 to Q374 the composition is skewed to polar residues. At S369 the chain carries Phosphoserine. 5 consecutive SH3 domains span residues L415–E477, S495–D554, V571–D630, L661–A720, and P730–I789. Position 762 is a phosphoserine (S762).

Interacts with ADAM12. Isoform 4 and isoform 5 (but not isoform 1 and isoform 2) interact with ADAM9, ADAM10, ADAM15 and ADAM17. Interacts with SH3GL1 SH3 domain. Interacts via SH3 3 and SH3 4 or SH3 4 and SH3 5 domains with SOS2. Probably forms a trimeric complex with SH3GL1 and SOS2. Interacts with SH3YL1. As to expression, widely expressed with highest levels in heart, skeletal muscle, kidney, liver, placenta, small intestine and lung. Expressed at low levels in colon, thymus, spleen and leukocytes.

It is found in the cytoplasm. Its subcellular location is the nucleus. May play a role in regulating A disintegrin and metalloproteases (ADAMs) in the signaling of EGFR-ligand shedding. May be involved in suppression of Ras-induced cellular transformation and Ras-mediated activation of ELK1. Plays a role in the regulation of cell morphology and cytoskeletal organization. The chain is SH3 domain-containing protein 19 (SH3D19) from Homo sapiens (Human).